The sequence spans 542 residues: Chaperonin GroEL 2 (542 aa).

ATP-binding positions include 30–33 (TLGP), Lys51, 87–91 (DGTTT), Gly415, and Asp494.

The protein belongs to the chaperonin (HSP60) family. Forms a cylinder of 14 subunits composed of two heptameric rings stacked back-to-back. Interacts with the co-chaperonin GroES.

It localises to the cytoplasm. The enzyme catalyses ATP + H2O + a folded polypeptide = ADP + phosphate + an unfolded polypeptide.. Functionally, together with its co-chaperonin GroES, plays an essential role in assisting protein folding. The GroEL-GroES system forms a nano-cage that allows encapsulation of the non-native substrate proteins and provides a physical environment optimized to promote and accelerate protein folding. This is Chaperonin GroEL 2 from Syntrophobacter fumaroxidans (strain DSM 10017 / MPOB).